Reading from the N-terminus, the 276-residue chain is MKTSNTKTPKPVLIAGPCVIESLENLRSIAIKLQPLANNERLDFYFKASFDKANRTSLESYRGPGLEKGLEMLQTIKDEFGYKILTDVHESYQASVAAKVADILQIPAFLCRQTDLIVAVSQTDAIVNIKKGQFMNPKDMQYSVLKALKTRDSSIQSPAYETALKNGVWLCERGSSFGYGNLVVDMRSLTIMREFAPVIFDATHSVQMPGGANGKSSGDSSFAPILARAAAAVGIDGLFAETHVDPKNALSDGANMLKPDELEHLVTDMLKIQNLF.

The protein belongs to the KdsA family.

Its subcellular location is the cytoplasm. It carries out the reaction D-arabinose 5-phosphate + phosphoenolpyruvate + H2O = 3-deoxy-alpha-D-manno-2-octulosonate-8-phosphate + phosphate. The protein operates within carbohydrate biosynthesis; 3-deoxy-D-manno-octulosonate biosynthesis; 3-deoxy-D-manno-octulosonate from D-ribulose 5-phosphate: step 2/3. It participates in bacterial outer membrane biogenesis; lipopolysaccharide biosynthesis. In Helicobacter pylori (strain P12), this protein is 2-dehydro-3-deoxyphosphooctonate aldolase.